Here is a 207-residue protein sequence, read N- to C-terminus: ATP-dependent Clp protease proteolytic subunit (207 aa).

Ser-111 serves as the catalytic Nucleophile. Residue His-136 is part of the active site.

Belongs to the peptidase S14 family. Fourteen ClpP subunits assemble into 2 heptameric rings which stack back to back to give a disk-like structure with a central cavity, resembling the structure of eukaryotic proteasomes.

The protein localises to the cytoplasm. It catalyses the reaction Hydrolysis of proteins to small peptides in the presence of ATP and magnesium. alpha-casein is the usual test substrate. In the absence of ATP, only oligopeptides shorter than five residues are hydrolyzed (such as succinyl-Leu-Tyr-|-NHMec, and Leu-Tyr-Leu-|-Tyr-Trp, in which cleavage of the -Tyr-|-Leu- and -Tyr-|-Trp bonds also occurs).. Functionally, cleaves peptides in various proteins in a process that requires ATP hydrolysis. Has a chymotrypsin-like activity. Plays a major role in the degradation of misfolded proteins. The polypeptide is ATP-dependent Clp protease proteolytic subunit (Photorhabdus laumondii subsp. laumondii (strain DSM 15139 / CIP 105565 / TT01) (Photorhabdus luminescens subsp. laumondii)).